A 211-amino-acid chain; its full sequence is Large ribosomal subunit protein bL9 (211 aa).

Residues 183 to 211 (AAASEDEELAETAGVAPAEPSEEDDSAKA) form a disordered region. The segment covering 202 to 211 (PSEEDDSAKA) has biased composition (acidic residues).

Belongs to the bacterial ribosomal protein bL9 family.

In terms of biological role, binds to the 23S rRNA. In Roseobacter denitrificans (strain ATCC 33942 / OCh 114) (Erythrobacter sp. (strain OCh 114)), this protein is Large ribosomal subunit protein bL9.